The following is a 309-amino-acid chain: Ribonuclease Z (309 aa).

Zn(2+)-binding residues include His63, His65, Asp67, His68, His145, Asp216, and His274. The active-site Proton acceptor is the Asp67.

The protein belongs to the RNase Z family. Homodimer. It depends on Zn(2+) as a cofactor.

The enzyme catalyses Endonucleolytic cleavage of RNA, removing extra 3' nucleotides from tRNA precursor, generating 3' termini of tRNAs. A 3'-hydroxy group is left at the tRNA terminus and a 5'-phosphoryl group is left at the trailer molecule.. Its function is as follows. Zinc phosphodiesterase, which displays some tRNA 3'-processing endonuclease activity. Probably involved in tRNA maturation, by removing a 3'-trailer from precursor tRNA. The sequence is that of Ribonuclease Z from Streptococcus equi subsp. zooepidemicus (strain H70).